The sequence spans 673 residues: Elongation factor G 1 (673 aa).

In terms of domain architecture, tr-type G spans 3–277 (KELRNIGIIA…SIVDYLPSPL (275 aa)). GTP is bound by residues 12–19 (AHIDAGKT), 76–80 (DTPGH), and 130–133 (NKMD).

Belongs to the TRAFAC class translation factor GTPase superfamily. Classic translation factor GTPase family. EF-G/EF-2 subfamily.

Its subcellular location is the cytoplasm. Its function is as follows. Catalyzes the GTP-dependent ribosomal translocation step during translation elongation. During this step, the ribosome changes from the pre-translocational (PRE) to the post-translocational (POST) state as the newly formed A-site-bound peptidyl-tRNA and P-site-bound deacylated tRNA move to the P and E sites, respectively. Catalyzes the coordinated movement of the two tRNA molecules, the mRNA and conformational changes in the ribosome. The chain is Elongation factor G 1 from Syntrophomonas wolfei subsp. wolfei (strain DSM 2245B / Goettingen).